Reading from the N-terminus, the 37-residue chain is Mastoparan-VT (37 aa).

The propeptide occupies 1-22 (EALADPIADPVAGPNPEADPEA). AXPX repeat units lie at residues 4–7 (ADPI), 8–11 (ADPV), 12–15 (AGPN), and 18–21 (ADPE). Leucine 36 bears the Leucine amide mark.

Belongs to the MCD family. Mastoparan subfamily. Expressed by the venom gland.

It is found in the secreted. The protein resides in the target cell membrane. Antimicrobial peptide with potent activity against both Gram-positive (S.aureus MIC=50 ug/ml, and B.subtilis MIC=25 ug/ml) and Gram-negative bacteria (P.aeruginosa MIC=25 ug/ml, E.coli MIC=3-50 ug/ml, K.pneumoniae MIC=25 ug/ml). Exhibits little hemolytic activity on human erythrocytes. The polypeptide is Mastoparan-VT (Vespa tropica (Greater banded hornet)).